Consider the following 709-residue polypeptide: MISNLRISNYFIIFYVLFLIIPIKVTSIHFVDSQHNVILILTDDQDIELGSMDFMPKTSQIMKERGTEFTSGYVTTPICCPSRSTILTGLYVHNHHVHTNNQNCTGVEWRKVHEKKSIGVYLQEAGYRTAYLGKYLNEYDGSYIPPGWDEWHAIVKNSKFYNYTMNSNGEREKFGSEYEKDYFTDLVTNRSLKFIDKHIKIRAWQPFALIISYPAPHGPEDPAPQFAHMFENEISHRTGSWNFAPNPDKQWLLQRTGKMNDVHISFTDLLHRRRLQTLQSVDEGIERLFNLLRELNQLWNTYAIYTSDHGYHLGQFGLLKGKNMPYEFDIRVPFFMRGPGIPRNVTFNEIVTNVDIAPTMLHIAGVPKPARMNGRSLLELVALKKKKKKHMTALKPWRDTILIERGKMPKLKKIRDRYIKQKKKFNKENRLSKECKRRKWQRDCVHGQLWKCYYTVEDRWRIYKCRDNWSDQCSCRKKREISNYDDDDIDEFLTYADRENFSEGHEWYQGEFEDSGEVGEELDGHRSKRGILSKCSCSRNVSHPIKLLEQKMSKKHYLKYKKKPQNGSLKPKDCSLPQMNCFTHTASHWKTPPLWPEELGEFCFCQNCNNNTYWCLRTKNETHNFLYCEFVTEFISFYDFNTDPDQLINAVYSLDIGVLEQLSEQLRNLRKCKNRQCEIWSTSQMLRSPKLVDLRVNEKSFLTYQPEKT.

Positions 1-27 (MISNLRISNYFIIFYVLFLIIPIKVTS) are cleaved as a signal peptide. Ca(2+) contacts are provided by Asp43, Asp44, and Cys79. Cys79 (nucleophile) is an active-site residue. Cys79 is modified (3-oxoalanine (Cys)). Asn103, Asn162, and Asn189 each carry an N-linked (GlcNAc...) asparagine glycan. Residues Asp308 and His309 each contribute to the Ca(2+) site. Residues Asn344, Asn468, Asn500, Asn540, Asn566, Asn610, and Asn620 are each glycosylated (N-linked (GlcNAc...) asparagine).

It belongs to the sulfatase family. Ca(2+) serves as cofactor. The conversion to 3-oxoalanine (also known as C-formylglycine, FGly), of a serine or cysteine residue in prokaryotes and of a cysteine residue in eukaryotes, is critical for catalytic activity.

The protein localises to the endoplasmic reticulum. The protein resides in the golgi apparatus. It is found in the golgi stack. Its subcellular location is the cell surface. In Caenorhabditis elegans, this protein is Putative extracellular sulfatase Sulf-1 homolog (sul-1).